The following is a 150-amino-acid chain: Large ribosomal subunit protein uL13 (150 aa).

Residues 129–150 form a disordered region; the sequence is TEHPHAAQKPQPLQLNPSASAQ. The segment covering 139–150 has biased composition (polar residues); it reads QPLQLNPSASAQ.

Belongs to the universal ribosomal protein uL13 family. In terms of assembly, part of the 50S ribosomal subunit.

Its function is as follows. This protein is one of the early assembly proteins of the 50S ribosomal subunit, although it is not seen to bind rRNA by itself. It is important during the early stages of 50S assembly. The chain is Large ribosomal subunit protein uL13 from Synechococcus sp. (strain CC9605).